The chain runs to 261 residues: tRNA pseudouridine synthase A (261 aa).

Aspartate 51 acts as the Nucleophile in catalysis. Tyrosine 109 provides a ligand contact to substrate.

It belongs to the tRNA pseudouridine synthase TruA family. In terms of assembly, homodimer.

The enzyme catalyses uridine(38/39/40) in tRNA = pseudouridine(38/39/40) in tRNA. In terms of biological role, formation of pseudouridine at positions 38, 39 and 40 in the anticodon stem and loop of transfer RNAs. The sequence is that of tRNA pseudouridine synthase A from Methylobacillus flagellatus (strain ATCC 51484 / DSM 6875 / VKM B-1610 / KT).